Reading from the N-terminus, the 321-residue chain is Ferredoxin--NADP reductase (321 aa).

7 residues coordinate FAD: Glu-33, Gln-41, Tyr-46, Val-86, Leu-119, Asp-277, and Ser-318.

It belongs to the ferredoxin--NADP reductase type 2 family. As to quaternary structure, homodimer. The cofactor is FAD.

It carries out the reaction 2 reduced [2Fe-2S]-[ferredoxin] + NADP(+) + H(+) = 2 oxidized [2Fe-2S]-[ferredoxin] + NADPH. This chain is Ferredoxin--NADP reductase, found in Lactococcus lactis subsp. cremoris (strain MG1363).